Consider the following 361-residue polypeptide: Feruloyl CoA ortho-hydroxylase 2 (361 aa).

The 102-residue stretch at 211–312 (GSTRINLNYY…RISVPIFVSP (102 aa)) folds into the Fe2OG dioxygenase domain. Residue Tyr-220 participates in 2-oxoglutarate binding. Residues His-235, Asp-237, and His-293 each coordinate Fe cation. Residues Arg-303 and Ser-305 each coordinate 2-oxoglutarate.

The protein belongs to the iron/ascorbate-dependent oxidoreductase family. The cofactor is L-ascorbate. Requires Fe(2+) as cofactor. As to expression, low expression in roots.

The enzyme catalyses (E)-feruloyl-CoA + 2-oxoglutarate + O2 = (E)-6-hydroxyferuloyl-CoA + succinate + CO2. It catalyses the reaction (E)-6-hydroxyferuloyl-CoA = scopoletin + CoA. In terms of biological role, 2-oxoglutarate (OG)- and Fe(II)-dependent dioxygenase (2OGD)involved in scopoletin biosynthesis. Converts feruloyl CoA into 6'-hydroxyferuloyl CoA but has no activity with ferulic acid, feruloylquinic acid, caffeic acid, caffeoyl CoA, p-coumaric acid, cinnamic acid, cinnamoyl CoA or benzoyl CoA. The protein is Feruloyl CoA ortho-hydroxylase 2 of Arabidopsis thaliana (Mouse-ear cress).